Reading from the N-terminus, the 509-residue chain is MELSPRAAELTSLLESRISNFYTNFQVDEIGRVVSVGDGIARVYGLNEIQAGEMVEFASGVKGIALNLENENVGIVVFGSDTAIKEGDLVKRTGSIVDVPAGKAMLGRVVDGLGVPIDGRGALSDHERRRVEVKAPGIIERKSVHEPMQTGLKAVDSLVPIGRGQRELIIGDRQTGKTAIAIDTILNQKQLNSRATSESETLYCVYVAIGQKRSTVAQLVQILSEANALEYSILVAATASDPAPLQFLAPYSGCAMGEYFRDNGMHALIIYDDLSKQAVAYRQMSLLLRRPPGREAFPGDVFYLHSRLLERAAKRSDQTGAGSLTALPVIETQAGDVSAYIPTNVIPITDGQICLETELFYRGIRPAINVGLSVSRVGSAAQLKTMKQVCGSSKLELAQYREVAALAQFGSDLDAATQALLNRGARLTEVPKQPQYAPLPIEKQILVIYAAVNGFCDRMPLDRISQYERAIPNSVKPELLQSFLEKGGLTNERKMEPDTFLKESALAFI.

171–178 serves as a coordination point for ATP; sequence GDRQTGKT.

It belongs to the ATPase alpha/beta chains family. As to quaternary structure, F-type ATPases have 2 components, CF(1) - the catalytic core - and CF(0) - the membrane proton channel. CF(1) has five subunits: alpha(3), beta(3), gamma(1), delta(1), epsilon(1). CF(0) has three main subunits: a, b and c.

It localises to the mitochondrion. The protein resides in the mitochondrion inner membrane. Its function is as follows. Mitochondrial membrane ATP synthase (F(1)F(0) ATP synthase or Complex V) produces ATP from ADP in the presence of a proton gradient across the membrane which is generated by electron transport complexes of the respiratory chain. F-type ATPases consist of two structural domains, F(1) - containing the extramembraneous catalytic core, and F(0) - containing the membrane proton channel, linked together by a central stalk and a peripheral stalk. During catalysis, ATP synthesis in the catalytic domain of F(1) is coupled via a rotary mechanism of the central stalk subunits to proton translocation. Subunits alpha and beta form the catalytic core in F(1). Rotation of the central stalk against the surrounding alpha(3)beta(3) subunits leads to hydrolysis of ATP in three separate catalytic sites on the beta subunits. Subunit alpha does not bear the catalytic high-affinity ATP-binding sites. This chain is ATP synthase subunit alpha, mitochondrial (ATPA), found in Nicotiana plumbaginifolia (Leadwort-leaved tobacco).